The sequence spans 403 residues: Serine/threonine-protein phosphatase 4 regulatory subunit 2-A (403 aa).

3 stretches are compositionally biased toward polar residues: residues 140 to 149, 156 to 170, and 183 to 196; these read EKNNSTSLNR, PSNS…NVNG, and SLSS…LPDS. The disordered stretch occupies residues 140–403; that stretch reads EKNNSTSLNR…DAPEEPMEQD (264 aa). Residues 197–211 are compositionally biased toward basic and acidic residues; that stretch reads TENKESDLQQKEKSQ. Composition is skewed to polar residues over residues 212-226 and 371-387; these read SDSA…ATTS and ATSS…SPME. Positions 388–403 are enriched in acidic residues; that stretch reads NSEEATDAPEEPMEQD.

It belongs to the PPP4R2 family. Serine/threonine-protein phosphatase 4 (PP4) occurs in different assemblies of the catalytic and one or more regulatory subunits.

In terms of biological role, regulatory subunit of serine/threonine-protein phosphatase 4 (PP4). This chain is Serine/threonine-protein phosphatase 4 regulatory subunit 2-A (ppp4r2-a), found in Xenopus laevis (African clawed frog).